Consider the following 147-residue polypeptide: GLSAEQKTALKDSWKILAANGETMVKNSAAMFGLLFEKYPDTKKHFKTFDGDHFAAMKATGMGKAHGMSVFSGLGALVSSVDDGECVLGLAKKLSRNHTARGVTANDFKLMRSIFGEFLDKATGGKATESMKSAWDALLGVLIENHQ.

Residues 1–147 (GLSAEQKTAL…LLGVLIENHQ (147 aa)) form the Globin domain. Heme b-binding residues include His66 and His98.

This sequence belongs to the globin family. In terms of assembly, homodimer.

This Tritia mutabilis (Sea snail) protein is Globin.